Here is a 573-residue protein sequence, read N- to C-terminus: 60 kDa heat shock protein, mitochondrial (573 aa).

The N-terminal 26 residues, Met1–Tyr26, are a transit peptide targeting the mitochondrion. At Lys31 the chain carries N6-succinyllysine. A phosphoserine mark is found at Ser67 and Ser70. Lys75 lines the ATP pocket. Lys75 carries the post-translational modification N6-acetyllysine. At Lys82 the chain carries N6-acetyllysine; alternate. At Lys82 the chain carries N6-succinyllysine; alternate. The residue at position 87 (Lys87) is an N6-acetyllysine. Phosphotyrosine is present on Tyr90. N6-acetyllysine is present on Lys91. Residue Asp111–Thr115 participates in ATP binding. N6-acetyllysine; alternate is present on Lys125. Residue Lys125 is modified to N6-succinyllysine; alternate. Position 130 is an N6-acetyllysine (Lys130). At Lys133 the chain carries N6-acetyllysine; alternate. N6-succinyllysine; alternate is present on Lys133. Lys133 is modified (N6-malonyllysine; alternate). N6-acetyllysine is present on Lys156. Residues Lys191, Lys202, Lys205, Lys218, and Lys236 each carry the N6-acetyllysine; alternate modification. An N6-succinyllysine; alternate mark is found at Lys191, Lys202, Lys205, Lys218, and Lys236. An N6-acetyllysine modification is found at Lys249. Lys250 carries the N6-acetyllysine; alternate modification. Residue Lys250 is modified to N6-succinyllysine; alternate. An N6-acetyllysine mark is found at Lys269 and Lys292. N6-succinyllysine is present on Lys301. Lys314 is modified (N6-acetyllysine). Lys352 bears the N6-acetyllysine; alternate mark. Lys352 carries the post-translational modification N6-succinyllysine; alternate. N6-acetyllysine occurs at positions 359 and 389. The residue at position 396 (Lys396) is an N6-acetyllysine; alternate. Position 396 is an N6-succinyllysine; alternate (Lys396). Phosphoserine is present on Ser410. Gly440 serves as a coordination point for ATP. At Lys469 the chain carries N6-acetyllysine. At Lys481 the chain carries N6-acetyllysine; alternate. Lys481 carries the post-translational modification N6-succinyllysine; alternate. Residue Ser488 is modified to Phosphoserine. Asp520 contributes to the ATP binding site. Residue Lys551 forms a Glycyl lysine isopeptide (Lys-Gly) (interchain with G-Cter in SUMO2) linkage.

The protein belongs to the chaperonin (HSP60) family. Homoheptamer arranged in a ring structure. The functional units of these chaperonins consist of heptameric rings of the large subunit Hsp60, which function as a back-to-back double ring. Interacts with 2 heptameric Hsp10 rings to form the symmetrical football complex. Interacts with HRAS. Interacts with ATAD3A. Interacts with ETFBKMT and EEF1AKMT3. Interacts with MFHAS1. As to quaternary structure, (Microbial infection) Interacts with hepatitis B virus/HBV protein X. In terms of assembly, (Microbial infection) Interacts with HTLV-1 protein p40tax.

Its subcellular location is the mitochondrion matrix. It catalyses the reaction ATP + H2O + a folded polypeptide = ADP + phosphate + an unfolded polypeptide.. Its function is as follows. Chaperonin implicated in mitochondrial protein import and macromolecular assembly. Together with Hsp10, facilitates the correct folding of imported proteins. May also prevent misfolding and promote the refolding and proper assembly of unfolded polypeptides generated under stress conditions in the mitochondrial matrix. The functional units of these chaperonins consist of heptameric rings of the large subunit Hsp60, which function as a back-to-back double ring. In a cyclic reaction, Hsp60 ring complexes bind one unfolded substrate protein per ring, followed by the binding of ATP and association with 2 heptameric rings of the co-chaperonin Hsp10. This leads to sequestration of the substrate protein in the inner cavity of Hsp60 where, for a certain period of time, it can fold undisturbed by other cell components. Synchronous hydrolysis of ATP in all Hsp60 subunits results in the dissociation of the chaperonin rings and the release of ADP and the folded substrate protein. In Homo sapiens (Human), this protein is 60 kDa heat shock protein, mitochondrial (HSPD1).